The primary structure comprises 88 residues: MSVYGLLSLLIFIVLAVNTSNGDPGKDCSEKEEYLYDSSNCDIFYECDESLKPQRMMCGPGTGWNQDKLVCDFLTNIDCTRGGKVAPK.

An N-terminal signal peptide occupies residues 1–16 (MSVYGLLSLLIFIVLA). A Chitin-binding type-2 domain is found at 25-81 (GKDCSEKEEYLYDSSNCDIFYECDESLKPQRMMCGPGTGWNQDKLVCDFLTNIDCTR). An intrachain disulfide couples Cys-58 to Cys-71.

This sequence belongs to the scoloptoxin-01 family. Post-translationally, contains 3 disulfide bonds. As to expression, expressed by the venom gland.

The protein localises to the secreted. This chain is U-scoloptoxin(01)-Tl1a, found in Thereuopoda longicornis (Long-legged centipede).